The chain runs to 962 residues: Insulin-degrading enzyme homolog (962 aa).

Low complexity predominate over residues Met1–Gln10. A disordered region spans residues Met1 to Ile21. Residue His74 participates in Zn(2+) binding. Glu77 functions as the Proton acceptor in the catalytic mechanism. Zn(2+)-binding residues include His78 and Glu155.

This sequence belongs to the peptidase M16 family. Homodimer. The cofactor is Zn(2+).

Its subcellular location is the cytoplasm. The polypeptide is Insulin-degrading enzyme homolog (Dictyostelium discoideum (Social amoeba)).